Reading from the N-terminus, the 536-residue chain is Probable cytochrome P450 520A1 (536 aa).

Residues 1-21 (MEILTFIIYLITFFILFDFYK) traverse the membrane as a helical segment. Cys479 contributes to the heme binding site.

It belongs to the cytochrome P450 family. It depends on heme as a cofactor.

It is found in the membrane. In Dictyostelium discoideum (Social amoeba), this protein is Probable cytochrome P450 520A1 (cyp520A1).